Here is a 171-residue protein sequence, read N- to C-terminus: 3-hydroxydecanoyl-[acyl-carrier-protein] dehydratase (171 aa).

Histidine 70 is an active-site residue.

The protein belongs to the thioester dehydratase family. FabA subfamily. As to quaternary structure, homodimer.

It localises to the cytoplasm. The enzyme catalyses a (3R)-hydroxyacyl-[ACP] = a (2E)-enoyl-[ACP] + H2O. It catalyses the reaction (3R)-hydroxydecanoyl-[ACP] = (2E)-decenoyl-[ACP] + H2O. It carries out the reaction (2E)-decenoyl-[ACP] = (3Z)-decenoyl-[ACP]. It participates in lipid metabolism; fatty acid biosynthesis. Its function is as follows. Necessary for the introduction of cis unsaturation into fatty acids. Catalyzes the dehydration of (3R)-3-hydroxydecanoyl-ACP to E-(2)-decenoyl-ACP and then its isomerization to Z-(3)-decenoyl-ACP. Can catalyze the dehydratase reaction for beta-hydroxyacyl-ACPs with saturated chain lengths up to 16:0, being most active on intermediate chain length. The chain is 3-hydroxydecanoyl-[acyl-carrier-protein] dehydratase from Shewanella denitrificans (strain OS217 / ATCC BAA-1090 / DSM 15013).